Here is a 122-residue protein sequence, read N- to C-terminus: Large ribosomal subunit protein uL14 (122 aa).

Belongs to the universal ribosomal protein uL14 family. As to quaternary structure, part of the 50S ribosomal subunit. Forms a cluster with proteins L3 and L19. In the 70S ribosome, L14 and L19 interact and together make contacts with the 16S rRNA in bridges B5 and B8.

Its function is as follows. Binds to 23S rRNA. Forms part of two intersubunit bridges in the 70S ribosome. The sequence is that of Large ribosomal subunit protein uL14 from Albidiferax ferrireducens (strain ATCC BAA-621 / DSM 15236 / T118) (Rhodoferax ferrireducens).